Consider the following 291-residue polypeptide: ATP synthase subunit a (291 aa).

A run of 5 helical transmembrane segments spans residues 47–67, 140–160, 167–187, 207–227, and 230–250; these read FTNL…LVFV, HFLI…IVGF, FFSF…LVLL, MMAG…MLFL, and IFYF…TGLE.

The protein belongs to the ATPase A chain family. As to quaternary structure, F-type ATPases have 2 components, CF(1) - the catalytic core - and CF(0) - the membrane proton channel. CF(1) has five subunits: alpha(3), beta(3), gamma(1), delta(1), epsilon(1). CF(0) has three main subunits: a, b and c.

The protein localises to the mitochondrion inner membrane. Mitochondrial membrane ATP synthase (F(1)F(0) ATP synthase or Complex V) produces ATP from ADP in the presence of a proton gradient across the membrane which is generated by electron transport complexes of the respiratory chain. F-type ATPases consist of two structural domains, F(1) - containing the extramembraneous catalytic core and F(0) - containing the membrane proton channel, linked together by a central stalk and a peripheral stalk. During catalysis, ATP synthesis in the catalytic domain of F(1) is coupled via a rotary mechanism of the central stalk subunits to proton translocation. Key component of the proton channel; it may play a direct role in the translocation of protons across the membrane. This is ATP synthase subunit a (ATP6) from Zea mays (Maize).